A 335-amino-acid polypeptide reads, in one-letter code: Fructose-1,6-bisphosphatase class 1 (335 aa).

Mg(2+) contacts are provided by Glu90, Asp113, Leu115, and Asp116. Residues 116–119, Asn209, Tyr242, and Lys272 contribute to the substrate site; that span reads DGSS. Position 278 (Glu278) interacts with Mg(2+).

It belongs to the FBPase class 1 family. In terms of assembly, homotetramer. Mg(2+) serves as cofactor.

It localises to the cytoplasm. The catalysed reaction is beta-D-fructose 1,6-bisphosphate + H2O = beta-D-fructose 6-phosphate + phosphate. It functions in the pathway carbohydrate biosynthesis; gluconeogenesis. In Mannheimia succiniciproducens (strain KCTC 0769BP / MBEL55E), this protein is Fructose-1,6-bisphosphatase class 1.